Consider the following 379-residue polypeptide: Wnt inhibitory factor 1 (379 aa).

The first 28 residues, 1 to 28 (MARRRAFPAFALRLWSILPCLLLLRADA), serve as a signal peptide directing secretion. In terms of domain architecture, WIF spans 38-177 (LWIDAHQARV…PQNAIFFKTC (140 aa)). An N-linked (GlcNAc...) asparagine glycan is attached at Asn-88. Disulfide bonds link Cys-140/Cys-177, Cys-182/Cys-192, Cys-186/Cys-198, Cys-200/Cys-209, Cys-214/Cys-224, Cys-218/Cys-230, and Cys-232/Cys-241. 5 EGF-like domains span residues 178–210 (QQAE…PHCE), 211–242 (KALC…VNCD), 243–271 (KANC…LEGE), 274–306 (ELSK…DLCS), and 307–338 (KPVC…RHCN). N-linked (GlcNAc...) asparagine glycosylation is present at Asn-245. 8 cysteine pairs are disulfide-bonded: Cys-246-Cys-256, Cys-250-Cys-262, Cys-278-Cys-288, Cys-282-Cys-294, Cys-296-Cys-305, Cys-310-Cys-320, Cys-314-Cys-326, and Cys-328-Cys-337. A disordered region spans residues 348-379 (APRPAGAGLERHTPSLKKAEDRRDPPESNYIW). Positions 356 to 373 (LERHTPSLKKAEDRRDPP) are enriched in basic and acidic residues.

As to quaternary structure, interacts with MYOC. Expression highest in heart and lung. Lower in brain and eye.

It localises to the secreted. Binds to WNT proteins and inhibits their activities. May be involved in mesoderm segmentation. This is Wnt inhibitory factor 1 (Wif1) from Mus musculus (Mouse).